Here is a 218-residue protein sequence, read N- to C-terminus: Small ribosomal subunit protein uS3c (218 aa).

A KH type-2 domain is found at 47–118 (VQKNMRTSSG…KLNIAVTRIA (72 aa)).

Belongs to the universal ribosomal protein uS3 family. As to quaternary structure, part of the 30S ribosomal subunit.

It is found in the plastid. The protein localises to the chloroplast. This is Small ribosomal subunit protein uS3c (rps3) from Atropa belladonna (Belladonna).